The following is a 617-amino-acid chain: Ceramide transfer protein (617 aa).

Residues 1 to 11 (MSDNQSWNSSG) show a composition bias toward polar residues. The disordered stretch occupies residues 1 to 23 (MSDNQSWNSSGSEEDLETESGPP). The 95-residue stretch at 23 to 117 (PVERCGVLSK…WIDSIEQHKS (95 aa)) folds into the PH domain. Residues 268–302 (REDSWQKRLDKEIEKRRRVEEAYKNAMTELKKKSH) adopt a coiled-coil conformation. The FFAT motif lies at 320-326 (EFFDAVE). Over residues 332-344 (QDKIEQSQSEKGR) the composition is skewed to basic and acidic residues. Residues 332–355 (QDKIEQSQSEKGRSHWPSSLPSTE) form a disordered region. The START domain occupies 383-611 (DEHRFRIQVE…FTSYVQEKTA (229 aa)). Positions 466, 487, 524, and 572 each coordinate an N-acylsphing-4-enine.

The protein resides in the cytoplasm. The protein localises to the golgi apparatus. It is found in the endoplasmic reticulum. It catalyses the reaction N-hexadecanoylsphing-4-enine(in) = N-hexadecanoylsphing-4-enine(out). Its function is as follows. May mediate the intracellular trafficking of ceramide in a non-vesicular manner. In Xenopus tropicalis (Western clawed frog), this protein is Ceramide transfer protein (cert1).